Consider the following 4749-residue polypeptide: E3 ubiquitin-protein ligase MYCBP2 (4749 aa).

Disordered regions lie at residues 87 to 127, 170 to 192, and 609 to 628; these read DRDQ…RSKS, AASK…SREP, and ASKG…KPYK. A compositionally biased stretch (basic residues) spans 100-124; that stretch reads SRNKKILNKKKLKRKQKSKSKVKTR. Residues Ser-127, Ser-178, Ser-181, and Ser-183 each carry the phosphoserine modification. 5 RCC1 repeats span residues 600-655, 699-755, 907-957, 958-1009, and 1011-1066; these read DGSV…VISK, NGEV…MMCP, KRDK…VLME, NGDV…LLMD, and QVFT…LRID. Residues 899–910 show a composition bias toward basic residues; the sequence is SHPAQLKHKRDK. A disordered region spans residues 899–928; that stretch reads SHPAQLKHKRDKHKDGSGDRGEKDASKITT. The segment covering 911–924 has biased composition (basic and acidic residues); it reads HKDGSGDRGEKDAS. Residues 1235–1386 form a PHR domain 1 region; it reads NRFESHGGGW…GQIPQLLYRL (152 aa). A Phosphoserine modification is found at Ser-1621. The tract at residues 1723 to 1881 is PHR domain 2; the sequence is NRFTKTSQGR…GQIPQILYYR (159 aa). Cys-1745 and Cys-1860 are joined by a disulfide. The tract at residues 2018-2544 is RAE1 binding; the sequence is AVIESEHPYK…FNQHLGKSLL (527 aa). Disordered stretches follow at residues 2313–2336 and 2780–3084; these read KKTS…SAAA and QQRQ…KGDG. Residues 2331–2438 form a Filamin repeat; it reads SPSAAASSAD…IDAGLEVKVK (108 aa). The span at 2780 to 2803 shows a compositional bias: polar residues; the sequence is QQRQLQSDRGTISTSSRPVSTSGK. A compositionally biased stretch (basic and acidic residues) spans 2814–2832; sequence VKPDGHVSRTPADQKKPRG. At Ser-2841 the chain carries Phosphoserine. Residues 2847 to 2857 are compositionally biased toward basic and acidic residues; the sequence is DAAKLRSDSHS. A compositionally biased stretch (polar residues) spans 2858–2879; the sequence is RSLSPNHNTLQTLKSDGRTSSG. Phosphoserine is present on residues Ser-2859 and Ser-2861. 2 stretches are compositionally biased toward low complexity: residues 2884–2894 and 2904–2917; these read SPGPGSRSSSP and SSPS…SSSP. Phosphoserine occurs at positions 2905 and 2911. Polar residues predominate over residues 2918–2929; sequence QDKNLPQKSTAP. The span at 2932–2943 shows a compositional bias: basic and acidic residues; that stretch reads TKLDPPRERSKS. 3 positions are modified to phosphoserine: Ser-2941, Ser-2943, and Ser-2992. The span at 3008-3021 shows a compositional bias: polar residues; it reads CTSSTLKTNGVTDS. 2 stretches are compositionally biased toward basic and acidic residues: residues 3027-3037 and 3047-3056; these read GDLKSVDEGSN and PLKDEQEMRA. Phosphoserine is present on Ser-3057. Over residues 3060–3073 the composition is skewed to basic residues; the sequence is ISRKCANRHTRPKK. Ser-3162, Ser-3550, and Ser-3577 each carry phosphoserine. A disordered region spans residues 3677-3700; sequence VEAEEDEDEDNKSNKENAEQEKDT. Over residues 3687-3700 the composition is skewed to basic and acidic residues; that stretch reads NKSNKENAEQEKDT. A DOC domain is found at 3789 to 3967; it reads FSISVQSGFE…SVAQQRSCEA (179 aa). The interval 3986-4007 is disordered; the sequence is SGDAEPTPEQEEKALLSSPEGE. Thr-3992 carries the post-translational modification Phosphothreonine. Ser-4002 and Ser-4003 each carry phosphoserine. The Zn(2+) site is built by Cys-4499, Cys-4502, Cys-4517, His-4519, His-4522, Cys-4525, Cys-4546, Cys-4549, Cys-4615, and Cys-4618. An RING-type; atypical zinc finger spans residues 4499 to 4550; that stretch reads CMICFTEALSAAPAIQLDCSHVFHLQCCRRVLENRWLGPRITFGFISCPICK. Residues 4610–4747 are tandem cysteine domain; sequence YAYYVCYKCR…LGCGVCRNAH (138 aa). Cys-4629 is a catalytic residue. Zn(2+)-binding residues include Cys-4646, Cys-4649, Cys-4658, His-4661, Cys-4670, Cys-4673, and Cys-4674. The active site involves Cys-4681. Zn(2+)-binding residues include Cys-4688, Cys-4691, Cys-4709, Cys-4723, His-4729, Cys-4740, and Cys-4743.

Belongs to the RING-Cys relay (RCR) family. In terms of assembly, interacts with MYC. Interacts with TSC2 (tuberin) when TSC2 is in complex with TSC1 (hamartin). Interacts with FBXO45. Interacts with RAE1. Interacts with CPNE1 (via VWFA domain) and CPNE4 (via VWFA domain). Interacts with (sumoylated) RANGAP1; interaction with sumoylated RANGAP1 inhibits E3 ubiquitin-protein ligase activity and promotes MYCBP2 translocation to the nucleus. Interacts with RAN. Interacts with ATP13A2; the interaction inhibits the ubiquitination of TSC2 by MYCBP2. Interacts with USP11. In terms of processing, autoubiquitinated. As to expression, expression is mostly restricted to the nervous system, including expression in motor and sensory axons. During postnatal development, expression is particularly strong in the cerebellum, hippocampus and retina. Lower levels of expression are observed throughout the cerebral cortex.

Its subcellular location is the nucleus. It localises to the cell projection. The protein localises to the axon. It is found in the cytoplasm. The protein resides in the cytoskeleton. It catalyses the reaction [E2 ubiquitin-conjugating enzyme]-S-ubiquitinyl-L-cysteine + [acceptor protein]-L-threonine = [E2 ubiquitin-conjugating enzyme]-L-cysteine + [acceptor protein]-3-O-ubiquitinyl-L-threonine.. It participates in protein modification; protein ubiquitination. Atypical E3 ubiquitin-protein ligase which specifically mediates ubiquitination of threonine and serine residues on target proteins, instead of ubiquitinating lysine residues. Shows esterification activity towards both threonine and serine, with a preference for threonine, and acts via two essential catalytic cysteine residues that relay ubiquitin to its substrate via thioester intermediates. Interacts with the E2 enzymes UBE2D1, UBE2D3, UBE2E1 and UBE2L3. Plays a key role in neural development, probably by mediating ubiquitination of threonine residues on target proteins. Involved in different processes such as regulation of neurite outgrowth, synaptic growth, synaptogenesis and axon degeneration. Required for the formation of major central nervous system axon tracts. Required for proper axon growth by regulating axon navigation and axon branching: acts by regulating the subcellular location and stability of MAP3K12/DLK. Required for proper localization of retinogeniculate projections but not for eye-specific segregation. Regulates axon guidance in the olfactory system. Involved in Wallerian axon degeneration, an evolutionarily conserved process that drives the loss of damaged axons: acts by promoting destabilization of NMNAT2, probably via ubiquitination of NMNAT2. Catalyzes ubiquitination of threonine and/or serine residues on NMNAT2, consequences of threonine and/or serine ubiquitination are however unknown. Regulates the internalization of TRPV1 in peripheral sensory neurons. May mediate ubiquitination and subsequent proteasomal degradation of TSC2/tuberin. Independently of the E3 ubiquitin-protein ligase activity, also acts as a guanosine exchange factor (GEF) for RAN in neurons of dorsal root ganglia. May function as a facilitator or regulator of transcriptional activation by MYC. Acts in concert with HUWE1 to regulate the circadian clock gene expression by promoting the lithium-induced ubiquination and degradation of NR1D1. The polypeptide is E3 ubiquitin-protein ligase MYCBP2 (Mus musculus (Mouse)).